Reading from the N-terminus, the 129-residue chain is Glycine cleavage system H protein (129 aa).

In terms of domain architecture, Lipoyl-binding spans 24–106 (LLKIGVSEFA…IGEGWLVILK (83 aa)). Lys-65 is modified (N6-lipoyllysine).

It belongs to the GcvH family. In terms of assembly, the glycine cleavage system is composed of four proteins: P, T, L and H. It depends on (R)-lipoate as a cofactor.

Its function is as follows. The glycine cleavage system catalyzes the degradation of glycine. The H protein shuttles the methylamine group of glycine from the P protein to the T protein. The protein is Glycine cleavage system H protein of Prochlorococcus marinus (strain MIT 9312).